The chain runs to 467 residues: Retinoic acid receptor RXR-alpha (467 aa).

Residues 1 to 61 form a disordered region; it reads MDTKHFLPLD…LHSPISTLSS (61 aa). Residues 1-139 are modulating; the sequence is MDTKHFLPLD…GNMSSFTKHI (139 aa). A Glycyl lysine isopeptide (Lys-Gly) (interchain with G-Cter in SUMO2) cross-link involves residue Lys4. Phosphoserine is present on residues Ser22 and Ser28. Low complexity predominate over residues 32–55; it reads PSLHPSLGPGLGSPLGSPGQLHSP. 2 positions are modified to phosphoserine; by MAPK8 and MAPK9: Ser61 and Ser75. The interval 79-109 is disordered; the sequence is PHSMSVPTTPTLGFETGSPQLNSPMNPVSSS. The segment covering 83 to 109 has biased composition (polar residues); the sequence is SVPTTPTLGFETGSPQLNSPMNPVSSS. The residue at position 87 (Thr87) is a Phosphothreonine; by MAPK8 and MAPK9. Residue Lys113 forms a Glycyl lysine isopeptide (Lys-Gly) (interchain with G-Cter in SUMO) linkage. At Ser134 the chain carries Phosphoserine. The Zn(2+) site is built by Cys140 and Cys143. An NR C4-type zinc finger spans residues 140-160; it reads CAICGDRSSGKHYGVYSCEGC. Positions 140–205 form a DNA-binding region, nuclear receptor; the sequence is CAICGDRSSG…RYQKCLAMGM (66 aa). Lys150 is subject to N6-acetyllysine. Positions 157 and 160 each coordinate Zn(2+). The tract at residues 165–170 is nuclear localization signal; the sequence is KRTVRK. Zn(2+)-binding residues include Cys176, Cys182, Cys192, and Cys195. Residues 176–200 form an NR C4-type zinc finger; that stretch reads CRDNKDCLIDKRQRNRCQYCRYQKC. The tract at residues 206 to 229 is hinge; the sequence is KREAVQEERQRGKDRNENEVESTS. Over residues 211 to 223 the composition is skewed to basic and acidic residues; it reads QEERQRGKDRNEN. Residues 211 to 233 are disordered; that stretch reads QEERQRGKDRNENEVESTSSANE. One can recognise an NR LBD domain in the interval 232–463; the sequence is NEDMPVEKIL…TFLMEMLEAP (232 aa). Ser264 carries the post-translational modification Phosphoserine. Ser265 carries the post-translational modification Phosphoserine; by MAPK8 and MAPK9. Arg321 and Ala332 together coordinate 9-cis-retinoate. Residues Arg321 and Ala332 each contribute to the all-trans-retinoate site. The required for nuclear export stretch occupies residues 353–373; sequence RVLTELVSKMRDMQMDKTELG.

Belongs to the nuclear hormone receptor family. NR2 subfamily. In terms of assembly, homodimer. Heterodimer (via C-terminus) with RARA; required for ligand-dependent retinoic acid receptor transcriptional activity; association with RARA is enhanced by pulsatile shear stress. Heterodimer with PPARA (via the leucine-like zipper in the LBD); the interaction is required for PPARA transcriptional activity. Heterodimerizes with PPARG. Heterodimerizes (via NR LBD) with RARB. Heterodimerizes with NR1H4; the heterodimerization enhances the binding affinity for LXXLL motifs from coactivators. Interacts with NCOA3 and NCOA6 coactivators. Interacts with FAM120B. Interacts with coactivator PELP1, SENP6, SFPQ, DNTTIP2 and RNF8. Interacts with PRMT2. Interacts with ASXL1. Interacts with BHLHE40/DEC1, BHLHE41/DEC2, MED1, NCOR1 and NCOR2. Interacts in a ligand-dependent fashion with MED1 and NCOA1. Interacts with VDR. Interacts with EP300; the interaction is decreased by 9-cis retinoic acid. Heterodimer (via C-terminus) with NR4A1 (DNA-binding domain); the interaction is enhanced by 9-cis retinoic acid. NR4A1 competes with EP300 for interaction with RXRA and thereby attenuates EP300 mediated acetylation of RXRA. In the absence of hormonal ligand, interacts with TACC1. Interacts ith IGFBP3. In terms of processing, phosphorylated on serine and threonine residues mainly in the N-terminal modulating domain. Constitutively phosphorylated on Ser-22 in the presence or absence of ligand. Under stress conditions, hyperphosphorylated by activated JNK on Ser-61, Ser-75, Thr-87 and Ser-265. Phosphorylated on Ser-28, in vitro, by PKA. This phosphorylation is required for repression of cAMP-mediated transcriptional activity of RARA. Ubiquitinated by UBR5, leading to its degradation: UBR5 specifically recognizes and binds ligand-bound RXRA when it is not associated with coactivators (NCOAs). In presence of NCOAs, the UBR5-degron is not accessible, preventing its ubiquitination and degradation. Post-translationally, sumoylation negatively regulates transcriptional activity. Desumoylated specifically by SENP6. In terms of processing, acetylated by EP300; acetylation enhances DNA binding and transcriptional activity. In terms of tissue distribution, expressed in the adrenal gland with main expression in the zona fasciculata and medulla (at protein level). Expressed in aortic endothelial cells, with high expression in the descending thoracic aorta and the outer curvature of the aortic arch, where pulsatory shear stress exists, but very low in the inner curvature of the aortic arch, where oscillatory shear stress prevails (at protein level).

The protein localises to the nucleus. The protein resides in the cytoplasm. It is found in the mitochondrion. In terms of biological role, receptor for retinoic acid that acts as a transcription factor. Forms homo- or heterodimers with retinoic acid receptors (RARs) and binds to target response elements in response to their ligands, all-trans or 9-cis retinoic acid, to regulate gene expression in various biological processes. The RAR/RXR heterodimers bind to the retinoic acid response elements (RARE) composed of tandem 5'-AGGTCA-3' sites known as DR1-DR5 to regulate transcription. The high affinity ligand for retinoid X receptors (RXRs) is 9-cis retinoic acid. In the absence of ligand, the RXR-RAR heterodimers associate with a multiprotein complex containing transcription corepressors that induce histone deacetylation, chromatin condensation and transcriptional suppression. On ligand binding, the corepressors dissociate from the receptors and coactivators are recruited leading to transcriptional activation. Serves as a common heterodimeric partner for a number of nuclear receptors, such as RARA, RARB and PPARA. The RXRA/RARB heterodimer can act as a transcriptional repressor or transcriptional activator, depending on the RARE DNA element context. The RXRA/PPARA heterodimer is required for PPARA transcriptional activity on fatty acid oxidation genes such as ACOX1 and the P450 system genes. Together with RARA, positively regulates microRNA-10a expression, thereby inhibiting the GATA6/VCAM1 signaling response to pulsatile shear stress in vascular endothelial cells. Acts as an enhancer of RARA binding to RARE DNA element. May facilitate the nuclear import of heterodimerization partners such as VDR and NR4A1. Promotes myelin debris phagocytosis and remyelination by macrophages. Plays a role in the attenuation of the innate immune system in response to viral infections, possibly by negatively regulating the transcription of antiviral genes such as type I IFN genes. Involved in the regulation of calcium signaling by repressing ITPR2 gene expression, thereby controlling cellular senescence. The sequence is that of Retinoic acid receptor RXR-alpha (Rxra) from Rattus norvegicus (Rat).